The primary structure comprises 602 residues: Glutamyl-tRNA(Gln) amidotransferase subunit B, mitochondrial (602 aa).

Belongs to the GatB/GatE family. GatB subfamily. Subunit of the heterotrimeric GatCAB amidotransferase (AdT) complex, composed of A, B and C subunits.

The protein resides in the mitochondrion. It carries out the reaction L-glutamyl-tRNA(Gln) + L-glutamine + ATP + H2O = L-glutaminyl-tRNA(Gln) + L-glutamate + ADP + phosphate + H(+). Its function is as follows. Allows the formation of correctly charged Gln-tRNA(Gln) through the transamidation of misacylated Glu-tRNA(Gln) in the mitochondria. The reaction takes place in the presence of glutamine and ATP through an activated gamma-phospho-Glu-tRNA(Gln). This Paracoccidioides lutzii (strain ATCC MYA-826 / Pb01) (Paracoccidioides brasiliensis) protein is Glutamyl-tRNA(Gln) amidotransferase subunit B, mitochondrial.